The sequence spans 239 residues: MKNDVISPEFDENGRPLRRIRSFVRRQGRLTKGQEHALENYWPVMGVEFSEDMLDFPALFGREAPVTLEIGFGMGASLVAMAKDRPEQDFLGIEVHSPGVGACLASAHEEGLNNLRVMCHDAVEVLHKMIPDNSLRMVQLFFPDPWHKARHNKRRIVQVPFAELVKSKLQLGGVFHMATDWEPYAEHMLEVMSSIDGYKNLSESNDYVPRPASRPVTKFEQRGHRLGHGVWDLMFERVK.

Positions 69, 94, 121, and 144 each coordinate S-adenosyl-L-methionine. Aspartate 144 is an active-site residue. Lysine 148 lines the substrate pocket. The segment at 150 to 155 is interaction with RNA; that stretch reads RHNKRR. Substrate-binding positions include aspartate 180 and 217 to 220; that span reads TKFE.

This sequence belongs to the class I-like SAM-binding methyltransferase superfamily. TrmB family. In terms of assembly, monomer.

The enzyme catalyses guanosine(46) in tRNA + S-adenosyl-L-methionine = N(7)-methylguanosine(46) in tRNA + S-adenosyl-L-homocysteine. It functions in the pathway tRNA modification; N(7)-methylguanine-tRNA biosynthesis. Catalyzes the formation of N(7)-methylguanine at position 46 (m7G46) in tRNA. The chain is tRNA (guanine-N(7)-)-methyltransferase from Shigella boydii serotype 4 (strain Sb227).